The primary structure comprises 66 residues: DNA-directed RNA polymerase subunit Rpo10 (66 aa).

Zn(2+)-binding residues include Cys7, Cys10, Cys44, and Cys45.

It belongs to the archaeal Rpo10/eukaryotic RPB10 RNA polymerase subunit family. Part of the RNA polymerase complex. It depends on Zn(2+) as a cofactor.

The protein localises to the cytoplasm. It catalyses the reaction RNA(n) + a ribonucleoside 5'-triphosphate = RNA(n+1) + diphosphate. In terms of biological role, DNA-dependent RNA polymerase (RNAP) catalyzes the transcription of DNA into RNA using the four ribonucleoside triphosphates as substrates. This is DNA-directed RNA polymerase subunit Rpo10 from Saccharolobus islandicus (strain Y.N.15.51 / Yellowstone #2) (Sulfolobus islandicus).